The chain runs to 277 residues: MADPWQECMDYAVTLAGQAGEVVREALKNEMNIMVKSSPADLVTATDQKVEKMLITSIKEKYPSHSFIGEESVAAGEKSILTDNPTWIIDPIDGTTNFVHGFPFVAVSIGFVVNKKMEFGIVYSCLEDKMYTGRKGKGAFCNGQKLQVSHQEDITKSLLVTELGSSRTPETVRIILSNIERLLCLPIHGIRGVGTAALNMCLVAAGAADAYYEMGIHCWDVAGAGIIVTEAGGVLLDVTGGPFDLMSRRVIASSNKTLAERIAKEIQIIPLQRDDED.

Mg(2+) is bound by residues Glu70, Asp90, Ile92, and Asp93. A substrate-binding site is contributed by Glu70. 92 to 95 (IDGT) is a binding site for substrate. Phosphothreonine is present on Thr168. Substrate-binding positions include 194–196 (GTA), Glu213, and Asp220. Asp220 is a Mg(2+) binding site.

The protein belongs to the inositol monophosphatase superfamily. Homodimer. Requires Mg(2+) as cofactor. In terms of processing, the N-terminus is blocked.

Its subcellular location is the cytoplasm. The enzyme catalyses a myo-inositol phosphate + H2O = myo-inositol + phosphate. It carries out the reaction 1D-myo-inositol 1-phosphate + H2O = myo-inositol + phosphate. The catalysed reaction is 1D-myo-inositol 2-phosphate + H2O = myo-inositol + phosphate. It catalyses the reaction 1D-myo-inositol 3-phosphate + H2O = myo-inositol + phosphate. The enzyme catalyses 1D-myo-inositol 4-phosphate + H2O = myo-inositol + phosphate. It carries out the reaction 1D-myo-inositol 5-phosphate + H2O = myo-inositol + phosphate. The catalysed reaction is 1D-myo-inositol 6-phosphate + H2O = myo-inositol + phosphate. It catalyses the reaction scyllo-inositol 1-phosphate + H2O = scyllo-inositol + phosphate. The enzyme catalyses alpha-D-galactose 1-phosphate + H2O = D-galactose + phosphate. It carries out the reaction alpha-D-glucose 1-phosphate + H2O = D-glucose + phosphate. The catalysed reaction is D-glucose 6-phosphate + H2O = D-glucose + phosphate. It catalyses the reaction beta-D-fructose 1-phosphate + H2O = D-fructose + phosphate. The enzyme catalyses glycerol 2-phosphate + H2O = glycerol + phosphate. It carries out the reaction adenosine 2'-phosphate + H2O = adenosine + phosphate. Its pathway is polyol metabolism; myo-inositol biosynthesis; myo-inositol from D-glucose 6-phosphate: step 2/2. Activity with myo-inositol monophosphate and D-galactose 1-phosphate is inhibited by Li(+), Ca(2+) and Mn(2+), but also by Mg(2+) at concentrations above 3 mM. Functionally, phosphatase involved in the dephosphorylation of myo-inositol monophosphate to generate myo-inositol. Is also able to dephosphorylate scyllo-inositol-phosphate, myo-inositol 1,4-diphosphate, scyllo-inositol-1,3-diphosphate and scyllo-inositol-1,4-diphosphate. Also dephosphorylates in vitro other sugar-phosphates including D-galactose-1-phosphate, glucose-1-phosphate, glucose-6-phosphate, fructose-1-phosphate, beta-glycerophosphate and 2'-AMP. Responsible for the provision of inositol required for synthesis of phosphatidylinositol and polyphosphoinositides, and involved in maintaining normal brain function. Has been implicated as the pharmacological target for lithium Li(+) action in brain. Is equally active with myo-inositol monophosphate and D-galactose 1-phosphate. The polypeptide is Inositol monophosphatase 1 (IMPA1) (Bos taurus (Bovine)).